The sequence spans 523 residues: ATP synthase subunit beta, mitochondrial (523 aa).

The N-terminal 19 residues, 1–19, are a transit peptide targeting the mitochondrion; it reads MFSRVAKTSFSAVRAAKSQ. 201–208 contacts ATP; sequence GGAGVGKT.

The protein belongs to the ATPase alpha/beta chains family. In terms of assembly, F-type ATPases have 2 components, CF(1) - the catalytic core - and CF(0) - the membrane proton channel. CF(1) has five subunits: alpha(3), beta(3), gamma(1), delta(1), epsilon(1). CF(0) has three main subunits: a, b and c.

The protein resides in the mitochondrion. The protein localises to the mitochondrion inner membrane. The catalysed reaction is ATP + H2O + 4 H(+)(in) = ADP + phosphate + 5 H(+)(out). Mitochondrial membrane ATP synthase (F(1)F(0) ATP synthase or Complex V) produces ATP from ADP in the presence of a proton gradient across the membrane which is generated by electron transport complexes of the respiratory chain. F-type ATPases consist of two structural domains, F(1) - containing the extramembraneous catalytic core, and F(0) - containing the membrane proton channel, linked together by a central stalk and a peripheral stalk. During catalysis, ATP synthesis in the catalytic domain of F(1) is coupled via a rotary mechanism of the central stalk subunits to proton translocation. Subunits alpha and beta form the catalytic core in F(1). Rotation of the central stalk against the surrounding alpha(3)beta(3) subunits leads to hydrolysis of ATP in three separate catalytic sites on the beta subunits. In Hemicentrotus pulcherrimus (Sea urchin), this protein is ATP synthase subunit beta, mitochondrial.